The sequence spans 415 residues: Multidrug resistance protein MdtA (415 aa).

The first 21 residues, methionine 1–alanine 21, serve as a signal peptide directing secretion. The segment covering aspartate 31–proline 47 has biased composition (polar residues). Disordered regions lie at residues aspartate 31–alanine 60 and glutamate 392–serine 415. The segment covering serine 399–serine 415 has biased composition (basic and acidic residues).

This sequence belongs to the membrane fusion protein (MFP) (TC 8.A.1) family. Part of a tripartite efflux system composed of MdtA, MdtB and MdtC.

It localises to the cell inner membrane. The MdtABC tripartite complex confers resistance against novobiocin and deoxycholate. The chain is Multidrug resistance protein MdtA from Escherichia coli O139:H28 (strain E24377A / ETEC).